The chain runs to 315 residues: Putative quercetin 2,3-dioxygenase PA1205 (315 aa).

A divalent metal cation contacts are provided by histidine 77, histidine 79, histidine 121, and glutamate 123.

It belongs to the pirin family. A divalent metal cation serves as cofactor.

The catalysed reaction is quercetin + O2 = 2-(3,4-dihydroxybenzoyloxy)-4,6-dihydroxybenzoate + CO. The protein operates within flavonoid metabolism; quercetin degradation. In terms of biological role, putative quercetin 2,3-dioxygenase. The protein is Putative quercetin 2,3-dioxygenase PA1205 of Pseudomonas aeruginosa (strain ATCC 15692 / DSM 22644 / CIP 104116 / JCM 14847 / LMG 12228 / 1C / PRS 101 / PAO1).